The chain runs to 347 residues: N-acetyl-gamma-glutamyl-phosphate reductase (347 aa).

C150 is a catalytic residue.

This sequence belongs to the NAGSA dehydrogenase family. Type 1 subfamily.

Its subcellular location is the cytoplasm. The catalysed reaction is N-acetyl-L-glutamate 5-semialdehyde + phosphate + NADP(+) = N-acetyl-L-glutamyl 5-phosphate + NADPH + H(+). Its pathway is amino-acid biosynthesis; L-arginine biosynthesis; N(2)-acetyl-L-ornithine from L-glutamate: step 3/4. Functionally, catalyzes the NADPH-dependent reduction of N-acetyl-5-glutamyl phosphate to yield N-acetyl-L-glutamate 5-semialdehyde. In Halothermothrix orenii (strain H 168 / OCM 544 / DSM 9562), this protein is N-acetyl-gamma-glutamyl-phosphate reductase.